Reading from the N-terminus, the 147-residue chain is Peptide methionine sulfoxide reductase MsrB (147 aa).

Positions 8–131 (KEELKKVLTE…NSASLKFIPK (124 aa)) constitute a MsrB domain. The active-site Nucleophile is the Cys-120.

The protein belongs to the MsrB Met sulfoxide reductase family.

It carries out the reaction L-methionyl-[protein] + [thioredoxin]-disulfide + H2O = L-methionyl-(R)-S-oxide-[protein] + [thioredoxin]-dithiol. The chain is Peptide methionine sulfoxide reductase MsrB from Clostridium perfringens (strain ATCC 13124 / DSM 756 / JCM 1290 / NCIMB 6125 / NCTC 8237 / Type A).